Here is a 229-residue protein sequence, read N- to C-terminus: MSQGDSNPAAIPHAAEDIQGDDRWMSQHNRFVLDCKDKEPDVLFVGDSMVQLMQQYEIWRELFSPLHALNFGIGGDTTRHVLWRLKNGELENIKPKVIVVWVGTNNHENTAEEVAGGIEAIVQLINTRQPQAKIIVLGLLPRGEKPNPLRQKNAKVNQLLKVSLPKLANVQLLDIDGGFVHSDGAISCHDMFDFLHLTGGGYAKICKPLHELIMQLLEETPEEKQTTIA.

S2 carries the N-acetylserine modification. Phosphoserine is present on S2. The active site involves S48. At S64 the chain carries Phosphoserine. Catalysis depends on residues D193 and H196. T220 is subject to Phosphothreonine.

The protein belongs to the 'GDSL' lipolytic enzyme family. Platelet-activating factor acetylhydrolase IB beta/gamma subunits subfamily. Forms a catalytic dimer which is either homodimer (alpha2/alpha2 homodimer) or heterodimer with PAFAH1B3 (alpha2/alpha1 heterodimer). Component of the cytosolic (PAF-AH (I)) heterotetrameric enzyme, which is composed of PAFAH1B1 (beta), PAFAH1B2 (alpha2) and PAFAH1B3 (alpha1) subunits. The catalytic activity of the enzyme resides in the alpha1 (PAFAH1B3) and alpha2 (PAFAH1B2) subunits, whereas the beta subunit (PAFAH1B1) has regulatory activity. Trimer formation is not essential for the catalytic activity. Interacts (homodimer form) with PAFAH1B1 (homodimer form); PAFAH1B2 competes with NDEL1 for PAFAH1B1 binding. Interacts with VLDLR; this interaction may modulate the Reelin pathway.

It localises to the cytoplasm. The enzyme catalyses a 1-O-alkyl-2-acetyl-sn-glycero-3-phosphocholine + H2O = a 1-O-alkyl-sn-glycero-3-phosphocholine + acetate + H(+). The catalysed reaction is 1-O-hexadecyl-2-acetyl-sn-glycero-3-phosphocholine + H2O = 1-O-hexadecyl-sn-glycero-3-phosphocholine + acetate + H(+). It catalyses the reaction 1-O-hexadecyl-2-acetyl-sn-glycero-3-phosphate + H2O = 1-O-hexadecyl-sn-glycero-3-phosphate + acetate + H(+). It carries out the reaction 1-O-hexadecyl-2-acetyl-sn-glycero-3-phosphoethanolamine + H2O = 1-O-hexadecyl-sn-glycero-3-phosphoethanolamine + acetate + H(+). Beta subunit (PAFAH1B1) stimulates the acetylhydrolase activity of the alpha2/alpha2 catalytic homodimer. In terms of biological role, alpha2 catalytic subunit of the cytosolic type I platelet-activating factor (PAF) acetylhydrolase (PAF-AH (I)) heterotetrameric enzyme that catalyzes the hydrolyze of the acetyl group at the sn-2 position of PAF and its analogs and modulates the action of PAF. The activity and substrate specificity of PAF-AH (I) are affected by its subunit composition. The alpha2/alpha2 homodimer (PAFAH1B2/PAFAH1B2 homodimer) hydrolyzes PAF and 1-O-alkyl-2-acetyl-sn-glycero-3-phosphorylethanolamine (AAGPE) more efficiently than 1-O-alkyl-2-acetyl-sn-glycero-3-phosphoric acid (AAGPA). In contrast, the alpha1/alpha2 heterodimer(PAFAH1B3/PAFAH1B3 heterodimer) hydrolyzes AAGPA more efficiently than PAF, but has little hydrolytic activity towards AAGPE. May play a role in male germ cell meiosis during the late pachytenestage and meiotic divisions as well as early spermiogenesis. The protein is Platelet-activating factor acetylhydrolase IB subunit alpha2 of Mus musculus (Mouse).